The following is a 315-amino-acid chain: Porphobilinogen deaminase (315 aa).

S-(dipyrrolylmethanemethyl)cysteine is present on C245.

Belongs to the HMBS family. Monomer. Requires dipyrromethane as cofactor.

It carries out the reaction 4 porphobilinogen + H2O = hydroxymethylbilane + 4 NH4(+). Its pathway is porphyrin-containing compound metabolism; protoporphyrin-IX biosynthesis; coproporphyrinogen-III from 5-aminolevulinate: step 2/4. The protein operates within porphyrin-containing compound metabolism; chlorophyll biosynthesis. In terms of biological role, tetrapolymerization of the monopyrrole PBG into the hydroxymethylbilane pre-uroporphyrinogen in several discrete steps. This is Porphobilinogen deaminase from Prochlorococcus marinus (strain NATL2A).